The primary structure comprises 385 residues: Flap endonuclease 1 (385 aa).

The interval 1 to 104 is N-domain; sequence MGILGLSKLI…GELAKRAERR (104 aa). D34 contributes to the Mg(2+) binding site. The DNA site is built by R47 and R70. Mg(2+)-binding residues include D86, E158, E160, D179, and D181. Residues 122 to 253 are I-domain; that stretch reads GIEKFNRRLV…KRAIELINTY (132 aa). Residue E158 participates in DNA binding. DNA is bound by residues G231 and D233. Position 233 (D233) interacts with Mg(2+). The segment at 336–344 is interaction with PCNA; it reads TQVRLDSFF. Residues 346–385 form a disordered region; the sequence is TLPSTPNATNAAKRKADEAKKSANNKKAKTSGGGRGRRPK. Residues 368–385 are compositionally biased toward basic residues; sequence ANNKKAKTSGGGRGRRPK.

The protein belongs to the XPG/RAD2 endonuclease family. FEN1 subfamily. As to quaternary structure, interacts with PCNA. Three molecules of FEN1 bind to one PCNA trimer with each molecule binding to one PCNA monomer. PCNA stimulates the nuclease activity without altering cleavage specificity. Requires Mg(2+) as cofactor. In terms of processing, phosphorylated. Phosphorylation upon DNA damage induces relocalization to the nuclear plasma.

The protein localises to the nucleus. Its subcellular location is the nucleolus. It localises to the nucleoplasm. The protein resides in the mitochondrion. Its function is as follows. Structure-specific nuclease with 5'-flap endonuclease and 5'-3' exonuclease activities involved in DNA replication and repair. During DNA replication, cleaves the 5'-overhanging flap structure that is generated by displacement synthesis when DNA polymerase encounters the 5'-end of a downstream Okazaki fragment. It enters the flap from the 5'-end and then tracks to cleave the flap base, leaving a nick for ligation. Also involved in the long patch base excision repair (LP-BER) pathway, by cleaving within the apurinic/apyrimidinic (AP) site-terminated flap. Acts as a genome stabilization factor that prevents flaps from equilibrating into structures that lead to duplications and deletions. Also possesses 5'-3' exonuclease activity on nicked or gapped double-stranded DNA, and exhibits RNase H activity. Also involved in replication and repair of rDNA and in repairing mitochondrial DNA. The sequence is that of Flap endonuclease 1 from Drosophila sechellia (Fruit fly).